Reading from the N-terminus, the 207-residue chain is MSRYRGPRLRIIRRLQNLPGLTNKLVESKKNKVSGSDQSIQKKVSQYGIRLEAKQRLRFNYGLTERQLLNYVRIARCAKGSTGQILLQLLEMRLDNILFRLGFVPTIPSARQLINHRHILVNNRIVDVPSFHCKPKDIITIGAPKTYQSILSKRIESFAKDQIPEHLTLSLSEPKKPKGFVNYLINRESIGLKINELLVVEYYSRKA.

The 64-residue stretch at 92–155 folds into the S4 RNA-binding domain; sequence MRLDNILFRL…TYQSILSKRI (64 aa).

The protein belongs to the universal ribosomal protein uS4 family. Part of the 30S ribosomal subunit. Contacts protein S5. The interaction surface between S4 and S5 is involved in control of translational fidelity.

The protein resides in the plastid. The protein localises to the chloroplast. Its function is as follows. One of the primary rRNA binding proteins, it binds directly to 16S rRNA where it nucleates assembly of the body of the 30S subunit. In terms of biological role, with S5 and S12 plays an important role in translational accuracy. The polypeptide is Small ribosomal subunit protein uS4c (rps4) (Equisetum giganteum (Giant horsetail)).